The primary structure comprises 239 residues: Ribonuclease HII (239 aa).

The RNase H type-2 domain maps to 30 to 221 (GPVAGVDEVG…VRRVANGSGG (192 aa)). 3 residues coordinate a divalent metal cation: aspartate 36, glutamate 37, and aspartate 130.

This sequence belongs to the RNase HII family. The cofactor is Mn(2+). It depends on Mg(2+) as a cofactor.

The protein resides in the cytoplasm. The enzyme catalyses Endonucleolytic cleavage to 5'-phosphomonoester.. Its function is as follows. Endonuclease that specifically degrades the RNA of RNA-DNA hybrids. This Mycolicibacterium paratuberculosis (strain ATCC BAA-968 / K-10) (Mycobacterium paratuberculosis) protein is Ribonuclease HII.